The chain runs to 328 residues: Carbonic anhydrase-related protein 11 (328 aa).

The first 23 residues, 1-23, serve as a signal peptide directing secretion; it reads MGAAARLSAPRALVLWAALGAAA. An Alpha-carbonic anhydrase domain is found at 33–303; that stretch reads DWWSYKDNLQ…LAHRALRGNR (271 aa). N-linked (GlcNAc...) asparagine glycans are attached at residues asparagine 118, asparagine 170, and asparagine 260. Positions 299 to 328 are disordered; it reads LRGNRDPRHPERRCRGPNYRLHVDGVPHGR. Basic and acidic residues predominate over residues 319 to 328; that stretch reads LHVDGVPHGR.

It belongs to the alpha-carbonic anhydrase family. In terms of tissue distribution, expressed abundantly in the brain with moderate expression also present in spinal cord and thyroid.

The protein resides in the secreted. In terms of biological role, does not have a catalytic activity. The sequence is that of Carbonic anhydrase-related protein 11 (CA11) from Homo sapiens (Human).